Consider the following 319-residue polypeptide: L-tryptophan isonitrile synthase AmbI1 (319 aa).

It belongs to the isocyanide synthase family.

It carries out the reaction D-ribulose 5-phosphate + L-tryptophan = (2S)-3-(1H-indol-3-yl)-2-isocyanopropanoate + hydroxyacetone + formaldehyde + phosphate + H2O + H(+). In terms of biological role, involved in the biosynthesis of ambiguines, a family of hapalindole-type alkaloids. Responsible for the synthesis of the isonitrile group on tryptophan using ribulose 5-phosphate as the source of the carbon atom. This chain is L-tryptophan isonitrile synthase AmbI1, found in Fischerella ambigua (strain UTEX 1903).